A 54-amino-acid polypeptide reads, in one-letter code: Large ribosomal subunit protein bL32c (54 aa).

This sequence belongs to the bacterial ribosomal protein bL32 family.

It is found in the plastid. The protein resides in the chloroplast. This chain is Large ribosomal subunit protein bL32c, found in Piper cenocladum (Ant piper).